A 204-amino-acid chain; its full sequence is Holliday junction branch migration complex subunit RuvA (204 aa).

The segment at 1–64 is domain I; the sequence is MIGRLQGILL…EDAHLLFGFA (64 aa). Residues 65-143 form a domain II region; sequence QKTDRTLFRE…GIKQSDFFVE (79 aa). The interval 144 to 155 is flexible linker; that stretch reads STHIPLSPSIES. Residues 156-204 are domain III; the sequence is HSESSSDEAISALIALGYKPAEAEKMVKRVAKPELTSEQVIREALKAAL.

The protein belongs to the RuvA family. Homotetramer. Forms an RuvA(8)-RuvB(12)-Holliday junction (HJ) complex. HJ DNA is sandwiched between 2 RuvA tetramers; dsDNA enters through RuvA and exits via RuvB. An RuvB hexamer assembles on each DNA strand where it exits the tetramer. Each RuvB hexamer is contacted by two RuvA subunits (via domain III) on 2 adjacent RuvB subunits; this complex drives branch migration. In the full resolvosome a probable DNA-RuvA(4)-RuvB(12)-RuvC(2) complex forms which resolves the HJ.

The protein localises to the cytoplasm. Its function is as follows. The RuvA-RuvB-RuvC complex processes Holliday junction (HJ) DNA during genetic recombination and DNA repair, while the RuvA-RuvB complex plays an important role in the rescue of blocked DNA replication forks via replication fork reversal (RFR). RuvA specifically binds to HJ cruciform DNA, conferring on it an open structure. The RuvB hexamer acts as an ATP-dependent pump, pulling dsDNA into and through the RuvAB complex. HJ branch migration allows RuvC to scan DNA until it finds its consensus sequence, where it cleaves and resolves the cruciform DNA. This Haemophilus influenzae (strain 86-028NP) protein is Holliday junction branch migration complex subunit RuvA.